Consider the following 102-residue polypeptide: NADH-quinone oxidoreductase subunit K 1 (102 aa).

Transmembrane regions (helical) follow at residues 5-25 (FEHV…CVLV), 30-50 (LIML…AFVG), and 65-85 (LVIM…VVYL).

Belongs to the complex I subunit 4L family. NDH-1 is composed of 14 different subunits. Subunits NuoA, H, J, K, L, M, N constitute the membrane sector of the complex.

The protein localises to the cell inner membrane. It carries out the reaction a quinone + NADH + 5 H(+)(in) = a quinol + NAD(+) + 4 H(+)(out). Its function is as follows. NDH-1 shuttles electrons from NADH, via FMN and iron-sulfur (Fe-S) centers, to quinones in the respiratory chain. The immediate electron acceptor for the enzyme in this species is believed to be ubiquinone. Couples the redox reaction to proton translocation (for every two electrons transferred, four hydrogen ions are translocated across the cytoplasmic membrane), and thus conserves the redox energy in a proton gradient. This is NADH-quinone oxidoreductase subunit K 1 from Geobacter metallireducens (strain ATCC 53774 / DSM 7210 / GS-15).